Reading from the N-terminus, the 353-residue chain is MTEPLKPRIDFDGPLEVDQNPKFRAQQTFDENQAQNFAPATLDEAPEEEGQVEAVMDAALRPKRSLWRKMVMGGLALFGASVVGQGVQWTMNAWQTQDWVALGGCAAGALIIGAGVGSVVTEWRRLWRLRQRAHERDEARDLLHSHGTGKGRAFCEKLAQQAGIDQSHPALQRWYASIHETQNDREVVSLYAHLVQPVLDAQARREICRSAAESTLMIAVSPLALVDMAFIAWRNLRLINRIATLYGIELGYYSRLRLFKLVLLNIAFAGASELVREVGMDWMSQDLAARLSTRAAQGIGAGLLTARLGIKAMELCRPLPWIDDDKPRLGDFRRQLIGQVKETLQKGKTPSEK.

3 helical membrane passes run 70-90, 100-120, and 213-233; these read MVMGGLALFGASVVGQGVQWT, VALGGCAAGALIIGAGVGSVV, and ESTLMIAVSPLALVDMAFIAW.

Belongs to the UPF0283 family.

The protein localises to the cell inner membrane. This chain is UPF0283 membrane protein YcjF, found in Shigella boydii serotype 4 (strain Sb227).